The following is a 1087-amino-acid chain: Exportin-7 (1087 aa).

One can recognise an Importin N-terminal domain in the interval 30–96 (AEKALVEFTN…RNYVLNYLAT (67 aa)).

It belongs to the exportin family.

It is found in the cytoplasm. The protein localises to the nucleus. In terms of biological role, mediates the nuclear export of proteins (cargos) with broad substrate specificity. This Gallus gallus (Chicken) protein is Exportin-7 (XPO7).